Reading from the N-terminus, the 455-residue chain is MRSEWVARRRGQANVTQMHFARQGVITEEMDYVARRENLPPELIRSEVARGRMIIPANINHTNLEPMCIGIASRCKVNANIGASPSSSGLAEELEKLKLAIKYGADTVMDLSTGGGDLDEIRTAIIQASPVPIGTVPIYQALESVHGNVEKLSAEDILHIIEKQAQQGVDYMTIHAGILIEYLPLVRNRLTGIVSRGGGILARWMLAHHKQNPLYTHFRDIIEIFKKYDVSFSLGDALRPGCLHDASDEAQMAELKTLGQLTRMAWEHDVQVMVEGPGHVPMDQIEFNVRKQMEECDEAPFYVLGPLVTDIAAGYDHISSAIGAALAGWYGAAMLCYVTPKEHLGLPNAEDVRNGLIAYKIAAHAADIARHRPGARDRDDEMSRARYNFDWNRQFELSLDPERAREYHDETLPADIYKTAEFCSMCGPKFCPMQTKMDAEALSELERFLAKQPTA.

Substrate-binding positions include N80, M109, Y139, H175, S195 to G197, D236 to R239, and E275. Position 279 (H279) interacts with Zn(2+). Residue Y302 participates in substrate binding. H343 serves as a coordination point for Zn(2+). The [4Fe-4S] cluster site is built by C423, C426, and C431.

The protein belongs to the ThiC family. [4Fe-4S] cluster is required as a cofactor.

The enzyme catalyses 5-amino-1-(5-phospho-beta-D-ribosyl)imidazole + S-adenosyl-L-methionine = 4-amino-2-methyl-5-(phosphooxymethyl)pyrimidine + CO + 5'-deoxyadenosine + formate + L-methionine + 3 H(+). The protein operates within cofactor biosynthesis; thiamine diphosphate biosynthesis. Catalyzes the synthesis of the hydroxymethylpyrimidine phosphate (HMP-P) moiety of thiamine from aminoimidazole ribotide (AIR) in a radical S-adenosyl-L-methionine (SAM)-dependent reaction. The protein is Phosphomethylpyrimidine synthase of Synechococcus sp. (strain JA-3-3Ab) (Cyanobacteria bacterium Yellowstone A-Prime).